The sequence spans 227 residues: UPF0173 metal-dependent hydrolase Oter_4201 (227 aa).

This sequence belongs to the UPF0173 family.

This Opitutus terrae (strain DSM 11246 / JCM 15787 / PB90-1) protein is UPF0173 metal-dependent hydrolase Oter_4201.